A 283-amino-acid polypeptide reads, in one-letter code: Pre-protein-C8 (283 aa).

The segment at residues 1–40 is a signal peptide (tat-type signal); sequence MKEDNNTSEESGRINRRNVLKTVGAAGLFAAGSTGMAAAA. The tract at residues 61–75 is helix-loop-helix (HLH) region; sequence ARELAKTPAFRELAQ.

In terms of assembly, immunity protein HalI interacts with Halocin-C8; the interaction is direct. In terms of processing, predicted to be exported by the Tat system. The position of the signal peptide cleavage has not been experimentally proven.

It localises to the secreted. Its subcellular location is the cell membrane. Has antibacterial activity against a wide variety of haloarchaeons. Causes cell lysis and death, possibly by disrupting the cell wall. Its function is as follows. Acts as an immunity protein for halocin-C8. Able to block the halocin-C8 activity by sequestering the activity of halocin-C8 through specific and direct binding. This Halobacterium sp. (strain AS7092) protein is Pre-protein-C8 (proC8).